Here is an 842-residue protein sequence, read N- to C-terminus: Glycogen phosphorylase, muscle form (842 aa).

At serine 2 the chain carries N-acetylserine. Serine 15 is modified (phosphoserine; by PHK; in form phosphorylase A). AMP-binding residues include aspartate 43 and tyrosine 76. Tyrosine 204 and tyrosine 227 each carry phosphotyrosine. 310-319 (RRFKSSKFGC) contributes to the AMP binding site. Serine 430 carries the post-translational modification Phosphoserine. Tyrosine 473 carries the post-translational modification Phosphotyrosine. The residue at position 514 (serine 514) is a Phosphoserine. N6-(pyridoxal phosphate)lysine is present on lysine 681. Phosphoserine is present on residues serine 747 and serine 748.

Belongs to the glycogen phosphorylase family. As to quaternary structure, homodimer. Homotetramer; to form the enzymatically active phosphorylase A. Pyridoxal 5'-phosphate serves as cofactor. Phosphorylation of Ser-15 converts phosphorylase B (unphosphorylated) to phosphorylase A.

The enzyme catalyses [(1-&gt;4)-alpha-D-glucosyl](n) + phosphate = [(1-&gt;4)-alpha-D-glucosyl](n-1) + alpha-D-glucose 1-phosphate. With respect to regulation, allosterically regulated through the non-covalent binding of metabolites, being activated by AMP and inhibited by ATP, ADP, and glucose-6-phosphate. The activity is also controlled by post-translational modifications including phosphorylation. Functionally, allosteric enzyme that catalyzes the rate-limiting step in glycogen catabolism, the phosphorolytic cleavage of glycogen to produce glucose-1-phosphate, and plays a central role in maintaining cellular and organismal glucose homeostasis. The sequence is that of Glycogen phosphorylase, muscle form from Homo sapiens (Human).